Consider the following 174-residue polypeptide: Guided entry of tail-anchored proteins factor 1 (174 aa).

Topologically, residues 1-8 (MSASETDR) are lumenal. The helical transmembrane segment at 9-29 (WAWLLVLCFVFGCNVLRILLP) threads the bilayer. Topologically, residues 30–99 (TLSSFISRVL…VKARTAQLAK (70 aa)) are cytoplasmic. Positions 39-94 (LQKDAEQESQMRAEIQSMKQELSTVNMMDEFARYARLERKINKMTDKLKTHVKART) form a coiled coil. An interaction with GET3/TRC40 region spans residues 39 to 97 (LQKDAEQESQMRAEIQSMKQELSTVNMMDEFARYARLERKINKMTDKLKTHVKARTAQL). The chain crosses the membrane as a helical span at residues 100 to 120 (IKWFISVAFYVLQAALMISLI). Residues 121–148 (WKYYSVPVAVVPSKWITPLDRLVAFPTR) lie on the Lumenal side of the membrane. A helical membrane pass occupies residues 149–169 (VAGGIGVTCWILVCNKVVAII). The Cytoplasmic portion of the chain corresponds to 170 to 174 (LHPFS).

It belongs to the WRB/GET1 family. In terms of assembly, component of the Golgi to ER traffic (GET) complex, which is composed of GET1, CAMLG/GET2 and GET3. Within the complex, GET1 and CAMLG form a heterotetramer which is stabilized by phosphatidylinositol binding and which binds to the GET3 homodimer. Interacts with CAMLG/GET2 (via C-terminus). GET3 shows a higher affinity for CAMLG than for GET1.

Its subcellular location is the endoplasmic reticulum membrane. Its function is as follows. Required for the post-translational delivery of tail-anchored (TA) proteins to the endoplasmic reticulum. Together with CAMLG/GET2, acts as a membrane receptor for soluble GET3/TRC40, which recognizes and selectively binds the transmembrane domain of TA proteins in the cytosol. Required to ensure correct topology and ER insertion of CAMLG. The sequence is that of Guided entry of tail-anchored proteins factor 1 from Rattus norvegicus (Rat).